A 318-amino-acid polypeptide reads, in one-letter code: Aquaporin-1 (318 aa).

Residues 1–16 (MVQFGSRANTNMTGLP) are compositionally biased toward polar residues. The segment at 1–27 (MVQFGSRANTNMTGLPTEQAVEDRRVG) is disordered. The Cytoplasmic segment spans residues 1 to 36 (MVQFGSRANTNMTGLPTEQAVEDRRVGNPKRDRMRN). The helical transmembrane segment at 37-57 (ALVIVLGEFCGTFMFLLLSFI) threads the bilayer. Over 58-77 (GAQTALVTNSPSDAGSPLLP) the chain is Extracellular. Residues 78–98 (FSLMYIAASFGTALAVNVWIF) form a helical membrane-spanning segment. Residues 99–108 (YRVSGGMFNP) are Cytoplasmic-facing. Positions 107 to 109 (NPA) match the NPA 1 motif. A helical transmembrane segment spans residues 109–129 (AVTLGLVLVGAVTPIHALLII). The Extracellular segment spans residues 130-165 (PTQLVAAITAAGITDALLPGKLLVTNALGNGTSVAQ). Asparagine 159 is a glycosylation site (N-linked (GlcNAc...) asparagine). The helical transmembrane segment at 166-186 (GVFIEMFLTSQLVLTVYFLAV) threads the bilayer. Topologically, residues 187–193 (EKHRSTH) are cytoplasmic. Residues 194–214 (LAPIGIGISVFIAHICATNWT) traverse the membrane as a helical segment. The Extracellular portion of the chain corresponds to 215-236 (GTSINPARSFGPSVVAGFHGYD). The NPA 2 signature appears at 219-221 (NPA). The helical transmembrane segment at 237–257 (WIYYIGPFMGSLLAFGCYKIF) threads the bilayer. Topologically, residues 258–318 (KVLEYQTANP…NDSVIDDQMV (61 aa)) are cytoplasmic. A disordered region spans residues 268–318 (GQDDDNLDRSGHHHFFGHRKEPMPHTHTDNIEPKDHGVPQRNDSVIDDQMV). The span at 285-305 (HRKEPMPHTHTDNIEPKDHGV) shows a compositional bias: basic and acidic residues.

It belongs to the MIP/aquaporin (TC 1.A.8) family.

The protein localises to the nucleus membrane. The enzyme catalyses H2O(in) = H2O(out). Functionally, probable water channel involved in responses to changes in environmental conditions and conidiation. Involved in responses to hyperosmotic conditions, oxidative stress and cell wall destabilization. Also required for proper transcriptional activation of genes involved in aurofusarin biosynthesis. Not involved in pathogenicity, but negatively regulates deoxynivalenol (DON) production. The polypeptide is Aquaporin-1 (Gibberella zeae (strain ATCC MYA-4620 / CBS 123657 / FGSC 9075 / NRRL 31084 / PH-1) (Wheat head blight fungus)).